The primary structure comprises 239 residues: Phosphoribosylaminoimidazole-succinocarboxamide synthase (239 aa).

The protein belongs to the SAICAR synthetase family.

The catalysed reaction is 5-amino-1-(5-phospho-D-ribosyl)imidazole-4-carboxylate + L-aspartate + ATP = (2S)-2-[5-amino-1-(5-phospho-beta-D-ribosyl)imidazole-4-carboxamido]succinate + ADP + phosphate + 2 H(+). Its pathway is purine metabolism; IMP biosynthesis via de novo pathway; 5-amino-1-(5-phospho-D-ribosyl)imidazole-4-carboxamide from 5-amino-1-(5-phospho-D-ribosyl)imidazole-4-carboxylate: step 1/2. The chain is Phosphoribosylaminoimidazole-succinocarboxamide synthase from Dichelobacter nodosus (strain VCS1703A).